A 419-amino-acid polypeptide reads, in one-letter code: Tyrosine--tRNA ligase 2 (419 aa).

Tyr-34 serves as a coordination point for L-tyrosine. Positions 39-48 (PTGDSMHIGH) match the 'HIGH' region motif. 2 residues coordinate L-tyrosine: Tyr-168 and Gln-172. The 'KMSKS' region signature appears at 230–234 (KFGKS). Lys-233 serves as a coordination point for ATP. The S4 RNA-binding domain maps to 352–418 (KNIVEWLVDL…GKKNYSLVKL (67 aa)).

Belongs to the class-I aminoacyl-tRNA synthetase family. TyrS type 1 subfamily. As to quaternary structure, homodimer.

The protein resides in the cytoplasm. The enzyme catalyses tRNA(Tyr) + L-tyrosine + ATP = L-tyrosyl-tRNA(Tyr) + AMP + diphosphate + H(+). In terms of biological role, catalyzes the attachment of tyrosine to tRNA(Tyr) in a two-step reaction: tyrosine is first activated by ATP to form Tyr-AMP and then transferred to the acceptor end of tRNA(Tyr). This is Tyrosine--tRNA ligase 2 from Bacillus thuringiensis subsp. konkukian (strain 97-27).